A 335-amino-acid polypeptide reads, in one-letter code: Pyridoxal 5'-phosphate synthase subunit PdxS (335 aa).

D30 contacts D-ribose 5-phosphate. K87 serves as the catalytic Schiff-base intermediate with D-ribose 5-phosphate. G159 provides a ligand contact to D-ribose 5-phosphate. R171 contacts D-glyceraldehyde 3-phosphate. D-ribose 5-phosphate-binding positions include G257 and 278 to 279; that span reads GS.

It belongs to the PdxS/SNZ family. As to quaternary structure, in the presence of PdxT, forms a dodecamer of heterodimers.

The enzyme catalyses aldehydo-D-ribose 5-phosphate + D-glyceraldehyde 3-phosphate + L-glutamine = pyridoxal 5'-phosphate + L-glutamate + phosphate + 3 H2O + H(+). It functions in the pathway cofactor biosynthesis; pyridoxal 5'-phosphate biosynthesis. In terms of biological role, catalyzes the formation of pyridoxal 5'-phosphate from ribose 5-phosphate (RBP), glyceraldehyde 3-phosphate (G3P) and ammonia. The ammonia is provided by the PdxT subunit. Can also use ribulose 5-phosphate and dihydroxyacetone phosphate as substrates, resulting from enzyme-catalyzed isomerization of RBP and G3P, respectively. This is Pyridoxal 5'-phosphate synthase subunit PdxS from Pyrococcus furiosus (strain ATCC 43587 / DSM 3638 / JCM 8422 / Vc1).